We begin with the raw amino-acid sequence, 215 residues long: Pyrrolidone-carboxylate peptidase (215 aa).

Residues glutamate 80, cysteine 143, and histidine 167 contribute to the active site.

The protein belongs to the peptidase C15 family. Homotetramer.

It localises to the cytoplasm. It catalyses the reaction Release of an N-terminal pyroglutamyl group from a polypeptide, the second amino acid generally not being Pro.. In terms of biological role, removes 5-oxoproline from various penultimate amino acid residues except L-proline. This Yersinia pestis bv. Antiqua (strain Antiqua) protein is Pyrrolidone-carboxylate peptidase.